Here is an 85-residue protein sequence, read N- to C-terminus: uncharacterized protein (85 aa).

This sequence belongs to the ycf76 family.

It localises to the plastid. It is found in the chloroplast. This is an uncharacterized protein from Saccharum hybrid (Sugarcane).